The sequence spans 370 residues: Molybdenum import ATP-binding protein ModC (370 aa).

The ABC transporter domain maps to 2-233; it reads SVRVDIGHRL…LDLLPAEERG (232 aa). 31-38 is an ATP binding site; that stretch reads GPSGSGKT. The 67-residue stretch at 293–359 folds into the Mop domain; it reads GLSALNILPG…VKTVSFDRAN (67 aa).

The protein belongs to the ABC transporter superfamily. Molybdate importer (TC 3.A.1.8) family. As to quaternary structure, the complex is composed of two ATP-binding proteins (ModC), two transmembrane proteins (ModB) and a solute-binding protein (ModA).

It localises to the cell inner membrane. It catalyses the reaction molybdate(out) + ATP + H2O = molybdate(in) + ADP + phosphate + H(+). Its function is as follows. Part of the ABC transporter complex ModABC involved in molybdenum import. Responsible for energy coupling to the transport system. In Mesorhizobium japonicum (strain LMG 29417 / CECT 9101 / MAFF 303099) (Mesorhizobium loti (strain MAFF 303099)), this protein is Molybdenum import ATP-binding protein ModC.